A 334-amino-acid polypeptide reads, in one-letter code: Chorismatase (334 aa).

The substrate site is built by Tyr-143, Arg-150, Tyr-203, and Arg-216. Catalysis depends on Glu-328, which acts as the Proton acceptor.

This sequence belongs to the FkbO/Hyg5 family. In terms of assembly, monomer.

It carries out the reaction chorismate + H2O = (3R,4R)-3,4-dihydroxy-3,4-dihydrobenzoate + pyruvate. Its function is as follows. Involved in the biosynthesis of the macrocyclic amino acid-linked polyketides rapamycin which is a potent immunosuppressant that prevents T-cell proliferation through initial binding to the immunophilin FKBP12. Catalyzes the hydrolysis of chorismate via a 1,4-conjugate elimination of water to yield (4R,5R)-4,5-dihydroxycyclohexa-1,5-dienecarboxylic acid (DCDC). This is Chorismatase (rapK) from Streptomyces rapamycinicus (strain ATCC 29253 / DSM 41530 / NRRL 5491 / AYB-994) (Streptomyces hygroscopicus (strain ATCC 29253)).